The following is a 165-amino-acid chain: Crossover junction endodeoxyribonuclease RuvC (165 aa).

Residues Asp8, Glu66, and Asp138 contribute to the active site. Mg(2+)-binding residues include Asp8, Glu66, and Asp138.

It belongs to the RuvC family. As to quaternary structure, homodimer which binds Holliday junction (HJ) DNA. The HJ becomes 2-fold symmetrical on binding to RuvC with unstacked arms; it has a different conformation from HJ DNA in complex with RuvA. In the full resolvosome a probable DNA-RuvA(4)-RuvB(12)-RuvC(2) complex forms which resolves the HJ. The cofactor is Mg(2+).

It localises to the cytoplasm. It catalyses the reaction Endonucleolytic cleavage at a junction such as a reciprocal single-stranded crossover between two homologous DNA duplexes (Holliday junction).. In terms of biological role, the RuvA-RuvB-RuvC complex processes Holliday junction (HJ) DNA during genetic recombination and DNA repair. Endonuclease that resolves HJ intermediates. Cleaves cruciform DNA by making single-stranded nicks across the HJ at symmetrical positions within the homologous arms, yielding a 5'-phosphate and a 3'-hydroxyl group; requires a central core of homology in the junction. The consensus cleavage sequence is 5'-(A/T)TT(C/G)-3'. Cleavage occurs on the 3'-side of the TT dinucleotide at the point of strand exchange. HJ branch migration catalyzed by RuvA-RuvB allows RuvC to scan DNA until it finds its consensus sequence, where it cleaves and resolves the cruciform DNA. This chain is Crossover junction endodeoxyribonuclease RuvC, found in Methylococcus capsulatus (strain ATCC 33009 / NCIMB 11132 / Bath).